Consider the following 1593-residue polypeptide: Nischarin (1593 aa).

A necessary for binding to phosphoinositide-3-P; not sufficient for targeting to endosomes region spans residues 1-134 (MAAATLSFGP…GVTAALAEEL (134 aa)). Residues 12–122 (REAEPAKEAR…AHFLHFHLYE (111 aa)) form the PX domain. Positions 121 to 695 (YEVNGVTAAL…ERLALEWALG (575 aa)) are necessary for homooligomerization and targeting to endosomes. The interaction with PAK1 stretch occupies residues 246–869 (MSVRFSATSM…LVYSDKRMVQ (624 aa)). LRR repeat units follow at residues 290 to 311 (ALTTLDLSHNSICEIDESVKLI), 313 to 334 (KIEYLDLSHNGLRVVDNLQHLY), 335 to 356 (NLVHLDLSYNKLSSLEGVHTKL), 358 to 379 (NVKTLNLAGNFLESLSGLHKLY), 380 to 401 (SLVNVDLRDNRIEQLDEVKSIG), and 405 to 426 (CLERLTLLNNPLSIIPDYRTKV). Residues 466 to 480 (SKLSNTEKKAGEDFR) show a composition bias toward basic and acidic residues. Residues 466–499 (SKLSNTEKKAGEDFRLPPAPCIRPGGSPPAAPAS) form a disordered region. A compositionally biased stretch (pro residues) spans 482 to 496 (PPAPCIRPGGSPPAA). Phosphoserine occurs at positions 543, 545, and 548. Positions 624–694 (IEAANQREEA…EERLALEWAL (71 aa)) form a coiled coil. The disordered stretch occupies residues 629 to 687 (QREEAHGEQGEEEEEEEEEEDVAENRYFEMGPPDAEEEEGSGQGEEDEEDEDEEAEEER). Acidic residues-rich tracts occupy residues 638 to 650 (GEEEEEEEEEEDV) and 662 to 685 (DAEEEEGSGQGEEDEEDEDEEAEE). An interaction with LIMK region spans residues 661 to 869 (PDAEEEEGSG…LVYSDKRMVQ (209 aa)). The interaction with ITGA5 stretch occupies residues 709 to 807 (KVLWCFLIHV…ANLHEFHADL (99 aa)). The segment at 1016-1185 (NPSAKPRNQP…PAGGPAPAEA (170 aa)) is disordered. Low complexity-rich tracts occupy residues 1038–1069 (ETPADAPAPAAVPPTASAPAPAEALAPDLAPV) and 1081–1158 (AEAP…APAP). 10 tandem repeats follow at residues 1081–1086 (AEAPAA), 1087–1092 (AEAPAA), 1093–1098 (AEAPAA), 1099–1104 (AEAPAA), 1105–1110 (AEAPAA), 1111–1116 (AEAPAA), 1123–1128 (AEAPAA), 1129–1134 (AEAPAA), 1135–1140 (AEAPAA), and 1141–1146 (AEAPAA). A 10 X 6 AA tandem repeat of A-E-A-P-A-A region spans residues 1081-1146 (AEAPAAAEAP…APAAAEAPAA (66 aa)). The span at 1159–1179 (NQAPAPARGPAPARGPAPAGG) shows a compositional bias: pro residues. Thr-1371 carries the post-translational modification Phosphothreonine. A Phosphoserine modification is found at Ser-1373.

As to quaternary structure, homooligomer. Interacts with GRB2. Interacts with PIK3R1; probably associates with the PI3-kinase complex. Interacts with IRS4. Found in a complex with ITGA5 and PAK1. Found in a complex with LIMK1 and PAK1. Interacts with ITGA5 (via cytoplasmic domain); this interaction is direct. Interacts with PAK1 (via kinase domain); this interaction is direct and is increased upon activation of PAK1. Interacts with LIMK1 (via PDZ and kinase domain); this interaction is direct. Interacts with LIMK2; this interaction depends on LIMK2 activity. Interacts with RAC1 (activated state). Interacts with STK11; this interaction may increase STK11 activity. Highly expressed in brain and kidney. Moderately expressed in heart, liver, lung and skeletal muscle. Not detected in spleen and testis.

It is found in the cell membrane. It localises to the cytoplasm. The protein localises to the early endosome. The protein resides in the recycling endosome. Acts either as the functional imidazoline-1 receptor (I1R) candidate or as a membrane-associated mediator of the I1R signaling. Binds numerous imidazoline ligands that induces initiation of cell-signaling cascades triggering to cell survival, growth and migration. Its activation by the agonist rilmenidine induces an increase in phosphorylation of mitogen-activated protein kinases MAPK1 and MAPK3 in rostral ventrolateral medulla (RVLM) neurons that exhibited rilmenidine-evoked hypotension. Blocking its activation with efaroxan abolished rilmenidine-induced mitogen-activated protein kinase phosphorylation in RVLM neurons. Acts as a modulator of Rac-regulated signal transduction pathways. Suppresses Rac1-stimulated cell migration by interacting with PAK1 and inhibiting its kinase activity. Also blocks Pak-independent Rac signaling by interacting with RAC1 and inhibiting Rac1-stimulated NF-kB response element and cyclin D1 promoter activation. Also inhibits LIMK1 kinase activity by reducing LIMK1 'Tyr-508' phosphorylation. Inhibits Rac-induced cell migration and invasion in breast and colon epithelial cells. Inhibits lamellipodia formation, when overexpressed. Plays a role in protection against apoptosis. Involved in association with IRS4 in the enhancement of insulin activation of MAPK1 and MAPK3. When overexpressed, induces a redistribution of cell surface ITGA5 integrin to intracellular endosomal structures. This Mus musculus (Mouse) protein is Nischarin (Nisch).